Reading from the N-terminus, the 500-residue chain is Lysine--tRNA ligase (500 aa).

Residues glutamate 410 and glutamate 417 each contribute to the Mg(2+) site.

The protein belongs to the class-II aminoacyl-tRNA synthetase family. Homodimer. Mg(2+) is required as a cofactor.

The protein resides in the cytoplasm. It carries out the reaction tRNA(Lys) + L-lysine + ATP = L-lysyl-tRNA(Lys) + AMP + diphosphate. The polypeptide is Lysine--tRNA ligase (Shewanella loihica (strain ATCC BAA-1088 / PV-4)).